Here is a 100-residue protein sequence, read N- to C-terminus: Large ribosomal subunit protein bL21 (100 aa).

It belongs to the bacterial ribosomal protein bL21 family. As to quaternary structure, part of the 50S ribosomal subunit. Contacts protein L20.

In terms of biological role, this protein binds to 23S rRNA in the presence of protein L20. This Mycoplasma capricolum subsp. capricolum (strain California kid / ATCC 27343 / NCTC 10154) protein is Large ribosomal subunit protein bL21.